The sequence spans 548 residues: Chaperonin GroEL 2 (548 aa).

ATP-binding positions include threonine 29–proline 32, aspartate 86–threonine 90, glycine 418, asparagine 482–alanine 484, and aspartate 498.

It belongs to the chaperonin (HSP60) family. As to quaternary structure, forms a cylinder of 14 subunits composed of two heptameric rings stacked back-to-back. Interacts with the co-chaperonin GroES.

It is found in the cytoplasm. It catalyses the reaction ATP + H2O + a folded polypeptide = ADP + phosphate + an unfolded polypeptide.. In terms of biological role, together with its co-chaperonin GroES, plays an essential role in assisting protein folding. The GroEL-GroES system forms a nano-cage that allows encapsulation of the non-native substrate proteins and provides a physical environment optimized to promote and accelerate protein folding. In Corynebacterium glutamicum (strain ATCC 13032 / DSM 20300 / JCM 1318 / BCRC 11384 / CCUG 27702 / LMG 3730 / NBRC 12168 / NCIMB 10025 / NRRL B-2784 / 534), this protein is Chaperonin GroEL 2.